The sequence spans 193 residues: Superoxide dismutase [Fe] (193 aa).

Fe cation is bound by residues His27, His74, Asp157, and His161.

Belongs to the iron/manganese superoxide dismutase family. As to quaternary structure, homodimer. Requires Fe cation as cofactor.

The catalysed reaction is 2 superoxide + 2 H(+) = H2O2 + O2. In terms of biological role, destroys superoxide anion radicals which are normally produced within the cells and which are toxic to biological systems. Partially complements double sodA-sodB deletions in E.coli. The protein is Superoxide dismutase [Fe] of Pseudomonas aeruginosa (strain ATCC 15692 / DSM 22644 / CIP 104116 / JCM 14847 / LMG 12228 / 1C / PRS 101 / PAO1).